The chain runs to 161 residues: Inner membrane assembly complex subunit 17 (161 aa).

A mitochondrion-targeting transit peptide spans methionine 1–tyrosine 22. At serine 23–phenylalanine 84 the chain is on the mitochondrial matrix side. The helical transmembrane segment at valine 85–tryptophan 107 threads the bilayer. Residues lysine 108–tryptophan 161 are Mitochondrial intermembrane-facing. The stretch at leucine 109–serine 138 forms a coiled coil.

It belongs to the INA17 family. In terms of assembly, component of the inner membrane assembly (INA) complex, composed of INA17 and INA22. Interacts with a subset of F(1)F(0)-ATP synthase subunits of the F(1)-domain and the peripheral stalk.

It is found in the mitochondrion inner membrane. In terms of biological role, component of the INA complex (INAC) that promotes the biogenesis of mitochondrial F(1)F(0)-ATP synthase. INAC facilitates the assembly of the peripheral stalk and promotes the assembly of the catalytic F(1)-domain with the membrane-embedded F(0)-domain. The chain is Inner membrane assembly complex subunit 17 from Lachancea thermotolerans (strain ATCC 56472 / CBS 6340 / NRRL Y-8284) (Yeast).